Here is a 180-residue protein sequence, read N- to C-terminus: UPF0340 protein BLi03936/BL03990 (180 aa).

Belongs to the UPF0340 family.

This chain is UPF0340 protein BLi03936/BL03990, found in Bacillus licheniformis (strain ATCC 14580 / DSM 13 / JCM 2505 / CCUG 7422 / NBRC 12200 / NCIMB 9375 / NCTC 10341 / NRRL NRS-1264 / Gibson 46).